Reading from the N-terminus, the 301-residue chain is Hydroxymethylglutaryl-CoA lyase (301 aa).

Residues 4-271 form the Pyruvate carboxyltransferase domain; that stretch reads VKVFEVGPRD…STGVDLEAVA (268 aa). R12 contributes to the substrate binding site. A divalent metal cation-binding residues include D13, H204, and H206. Residue C237 is part of the active site. Residue N246 coordinates a divalent metal cation.

Belongs to the HMG-CoA lyase family.

The enzyme catalyses (3S)-3-hydroxy-3-methylglutaryl-CoA = acetoacetate + acetyl-CoA. It functions in the pathway metabolic intermediate metabolism; (S)-3-hydroxy-3-methylglutaryl-CoA degradation; acetoacetate from (S)-3-hydroxy-3-methylglutaryl-CoA: step 1/1. In terms of biological role, involved in the catabolism of branched amino acids such as leucine. This Pseudomonas mevalonii protein is Hydroxymethylglutaryl-CoA lyase (mvaB).